Here is a 558-residue protein sequence, read N- to C-terminus: uncharacterized protein (558 aa).

A run of 6 helical transmembrane segments spans residues 63–83 (LTGI…PSIY), 90–110 (VTFG…TYWI), 143–163 (VAAV…TLYG), 168–188 (VFVT…ATNC), 226–246 (SLGS…VLLV), and 258–278 (VLIL…ILAW). The region spanning 279-330 (LTAAPVRVVRAALKRVEQGDLRGDLVVFDGTELGELQRGFNAMVNGLRERER) is the HAMP domain. The Guanylate cyclase domain occupies 362–486 (AVVFVDIVGS…KPVNQAARLC (125 aa)). The disordered stretch occupies residues 529 to 558 (TQLASPHRRPPGSIHLTAEHAEEIRTDRLG). A compositionally biased stretch (basic and acidic residues) spans 545–558 (TAEHAEEIRTDRLG).

It belongs to the adenylyl cyclase class-3 family.

The protein resides in the cell membrane. This is an uncharacterized protein from Mycobacterium tuberculosis (strain CDC 1551 / Oshkosh).